Consider the following 174-residue polypeptide: Co-chaperone protein HscB homolog (174 aa).

Residues 2 to 74 (NYFELFKFPP…IRRAEHMLSL (73 aa)) enclose the J domain.

Belongs to the HscB family. In terms of assembly, interacts with HscA and stimulates its ATPase activity.

In terms of biological role, co-chaperone involved in the maturation of iron-sulfur cluster-containing proteins. Seems to help targeting proteins to be folded toward HscA. This is Co-chaperone protein HscB homolog from Shewanella oneidensis (strain ATCC 700550 / JCM 31522 / CIP 106686 / LMG 19005 / NCIMB 14063 / MR-1).